A 336-amino-acid polypeptide reads, in one-letter code: UPF0065 protein in tcbD-tcbE intergenic region (336 aa).

An N-terminal signal peptide occupies residues 1–32; the sequence is MHSSKCPDLANIGRRRVLAGIALAMTTSSTRA.

This sequence belongs to the UPF0065 (bug) family.

It localises to the periplasm. In Pseudomonas sp. (strain P51), this protein is UPF0065 protein in tcbD-tcbE intergenic region.